Consider the following 217-residue polypeptide: Probable GTP-binding protein EngB (217 aa).

Positions 31–205 constitute an EngB-type G domain; the sequence is VGVEIAFAGR…LAILDAWCHP (175 aa). Residues 39 to 46, 66 to 70, 84 to 87, 151 to 154, and 184 to 186 each bind GTP; these read GRSNAGKS, GRTQL, DLPG, TKAD, and FSA. 2 residues coordinate Mg(2+): Ser-46 and Thr-68.

This sequence belongs to the TRAFAC class TrmE-Era-EngA-EngB-Septin-like GTPase superfamily. EngB GTPase family. Requires Mg(2+) as cofactor.

Necessary for normal cell division and for the maintenance of normal septation. The protein is Probable GTP-binding protein EngB of Shewanella amazonensis (strain ATCC BAA-1098 / SB2B).